The following is a 741-amino-acid chain: Protein O-mannosyl-transferase TMTC4 (741 aa).

Residues 1–14 (MAVLDTDLDHILPS) lie on the Cytoplasmic side of the membrane. The chain crosses the membrane as a helical span at residues 15–35 (SVLPPFWAKLVVGSVAIVCFA). Over 36-111 (RSYDGDFVFD…FHPVGFHVVN (76 aa)) the chain is Extracellular. The N-linked (GlcNAc...) asparagine glycan is linked to Asn78. Residues 112–132 (ILLHSGISVLMVDVFSVLFGG) traverse the membrane as a helical segment. Residues 133–141 (LQYTSKGRR) lie on the Cytoplasmic side of the membrane. A helical transmembrane segment spans residues 142–162 (LHLAPRASLLAALLFAVHPVH). The Extracellular segment spans residues 163 to 165 (TEC). The chain crosses the membrane as a helical span at residues 166-186 (VAGVVGRADLLCALFFLLSFL). At 187–198 (GYCKAFRESNKE) the chain is on the cytoplasmic side. A helical transmembrane segment spans residues 199–219 (GAHSSTFWVLLSIFLGAVAML). At 220-224 (CKEQG) the chain is on the extracellular side. A helical membrane pass occupies residues 225-245 (ITVLGLNAVFDILVIGKFNVL). Topologically, residues 246–268 (EIVQKVLHKDKSLENLGMLRNGG) are cytoplasmic. Residues 269–288 (LLFRMTLLTSGGAGMLYVRW) traverse the membrane as a helical segment. The Extracellular segment spans residues 289–354 (RIMGTGPPAF…PLIKSISDWR (66 aa)). A helical transmembrane segment spans residues 355–375 (VIALAALWFCLIGLICQALCS). Residues 376–382 (EDGHKRR) are Cytoplasmic-facing. A helical transmembrane segment spans residues 383 to 403 (ILTLGLGFLVIPFLPASNLFF). Residues 404 to 412 (RVGFVVAER) are Extracellular-facing. The chain crosses the membrane as a helical span at residues 413 to 433 (VLYLPSVGYCVLLTFGFGALS). Over 434–440 (KHTKKKK) the chain is Cytoplasmic. A helical membrane pass occupies residues 441–461 (LIAAVVLGILFINTLRCVLRS). The Extracellular segment spans residues 462–741 (GEWRSEEQLF…KLELMQKKAV (280 aa)). TPR repeat units lie at residues 482 to 515 (AKVHYNIGKNLADKGNQTAAIRYYREAVRLNPKY), 516 to 549 (VHAMNNLGNILKERNELQEAEELLSLAVQIQPDF), 550 to 583 (AAAWMNLGIVQNSLKRFEAAEQSYRTAIKHRRKY), 584 to 617 (PDCYYNLGRLYADLNRHVDALNAWRNATVLKPEH), 618 to 651 (SLAWNNMIILLDNTGNLAQAEAVGREALELIPND), 652 to 685 (HSLMFSLANVLGKSQKYKESEALFLKAIKANPNA), and 686 to 719 (ASYHGNLAVLYHRWGHLDLAKKHYEISLQLDPTA). N-linked (GlcNAc...) asparagine glycosylation occurs at Asn497. Asn609 carries N-linked (GlcNAc...) asparagine glycosylation.

Belongs to the TMTC family.

It localises to the membrane. It is found in the endoplasmic reticulum. The catalysed reaction is a di-trans,poly-cis-dolichyl beta-D-mannosyl phosphate + L-seryl-[protein] = 3-O-(alpha-D-mannosyl)-L-seryl-[protein] + a di-trans,poly-cis-dolichyl phosphate + H(+). The enzyme catalyses a di-trans,poly-cis-dolichyl beta-D-mannosyl phosphate + L-threonyl-[protein] = 3-O-(alpha-D-mannosyl)-L-threonyl-[protein] + a di-trans,poly-cis-dolichyl phosphate + H(+). Its pathway is protein modification; protein glycosylation. In terms of biological role, transfers mannosyl residues to the hydroxyl group of serine or threonine residues. The 4 members of the TMTC family are O-mannosyl-transferases dedicated primarily to the cadherin superfamily, each member seems to have a distinct role in decorating the cadherin domains with O-linked mannose glycans at specific regions. Also acts as O-mannosyl-transferase on other proteins such as PDIA3. This is Protein O-mannosyl-transferase TMTC4 from Homo sapiens (Human).